The following is a 232-amino-acid chain: Ubiquinone biosynthesis O-methyltransferase (232 aa).

Residues Arg36, Gly55, Asp76, and Met120 each coordinate S-adenosyl-L-methionine.

It belongs to the methyltransferase superfamily. UbiG/COQ3 family.

The catalysed reaction is a 3-demethylubiquinol + S-adenosyl-L-methionine = a ubiquinol + S-adenosyl-L-homocysteine + H(+). It catalyses the reaction a 3-(all-trans-polyprenyl)benzene-1,2-diol + S-adenosyl-L-methionine = a 2-methoxy-6-(all-trans-polyprenyl)phenol + S-adenosyl-L-homocysteine + H(+). Its pathway is cofactor biosynthesis; ubiquinone biosynthesis. O-methyltransferase that catalyzes the 2 O-methylation steps in the ubiquinone biosynthetic pathway. The polypeptide is Ubiquinone biosynthesis O-methyltransferase (Thiobacillus denitrificans (strain ATCC 25259 / T1)).